Consider the following 640-residue polypeptide: 1,4-alpha-glucan branching enzyme GlgB (640 aa).

Catalysis depends on D318, which acts as the Nucleophile. The Proton donor role is filled by E371.

Belongs to the glycosyl hydrolase 13 family. GlgB subfamily. Monomer.

It catalyses the reaction Transfers a segment of a (1-&gt;4)-alpha-D-glucan chain to a primary hydroxy group in a similar glucan chain.. Its pathway is glycan biosynthesis; glycogen biosynthesis. Functionally, catalyzes the formation of the alpha-1,6-glucosidic linkages in glycogen by scission of a 1,4-alpha-linked oligosaccharide from growing alpha-1,4-glucan chains and the subsequent attachment of the oligosaccharide to the alpha-1,6 position. The sequence is that of 1,4-alpha-glucan branching enzyme GlgB from Francisella tularensis subsp. holarctica (strain FTNF002-00 / FTA).